The sequence spans 411 residues: Flagellum-associated coiled-coil domain-containing protein 1 (411 aa).

The segment at 52-77 (SQPAKSTAFPRDKAQSRKLEESNKAP) is disordered. The segment covering 61-74 (PRDKAQSRKLEESN) has biased composition (basic and acidic residues). 2 coiled-coil regions span residues 124-220 (SDII…LKNM) and 278-328 (NESF…VVLE). At K353 the chain carries N6-acetyllysine. Positions 355–385 (FQTKLAEAEEKYKSTIQVLTEENNSLRQKVL) form a coiled coil.

The protein resides in the cytoplasm. It is found in the cytoplasmic granule. It localises to the cell projection. The protein localises to the cilium. Its subcellular location is the flagellum. The protein is Flagellum-associated coiled-coil domain-containing protein 1 of Rattus norvegicus (Rat).